The primary structure comprises 637 residues: Keratin, type II cytoskeletal 1 (637 aa).

A head region spans residues 1-187; sequence MSLQCSSRSL…DPQIQKVKSQ (187 aa). Arg12 bears the Omega-N-methylarginine mark. Phosphoserine occurs at positions 21 and 24. Arg49 carries the omega-N-methylarginine modification. Ser67 carries the phosphoserine modification. Residues 180–328 are a coiled coil; sequence QIQKVKSQER…DIDFFSALYQ (149 aa). A coil 1A region spans residues 188-223; that stretch reads EREQIKSLNDKFASFIDKVRFLEQQNQVLQTKWELL. Residues 188-501 enclose the IF rod domain; that stretch reads EREQIKSLND…KLLEGEEIRM (314 aa). The tract at residues 224–243 is linker 1; that stretch reads QQVDTTTRTQNLDPFFENYI. The coil 1B stretch occupies residues 244 to 334; the sequence is SILRRKVDSL…ALYQMEMSQM (91 aa). Lys284 is subject to N6,N6-dimethyllysine. The interval 335 to 358 is linker 12; the sequence is QTQISETNVVLSMDNNRSLDLDGI. The residue at position 352 (Ser352) is a Phosphoserine. The tract at residues 359 to 497 is coil 2; sequence ISEVKAQYDS…ATYKKLLEGE (139 aa). The stretch at 397–483 forms a coiled coil; that stretch reads DSVRNTKMEI…QELMNTKLAL (87 aa). Residues 498–637 are tail; it reads EIRMSGECTP…VSTSYSRGTK (140 aa). Disordered stretches follow at residues 505–533 and 563–637; these read CTPN…SGGG and YGGG…RGTK. Over residues 509–524 the composition is skewed to low complexity; sequence VSVSVSTSHTSMSGSS. 3 positions are modified to omega-N-methylarginine: Arg526, Arg585, and Arg607. A compositionally biased stretch (gly residues) spans 563-618; it reads YGGGSGGGSYGGGSGGGSSGSHRGGSGGGGGSSGGSYGGSSGGGRGGSSSGGGGVK. Residues 624 to 637 are compositionally biased toward polar residues; it reads TVKFVSTSYSRGTK.

Belongs to the intermediate filament family. As to quaternary structure, heterotetramer of two type I and two type II keratins. Heterodimer with KRT10. Two heterodimers of KRT1 and KRT10 form a heterotetramer. Forms a heterodimer with KRT14; the interaction is more abundant in the absence of KRT5. Interacts with PLEC isoform 1C, when in a heterodimer with KRT10. Interacts with ITGB1 in the presence of RACK1 and SRC, and with RACK1. Interacts with C1QBP; the association represents a cell surface kininogen receptor. Interacts with EPPK1; interaction is dependent of higher-order structure of intermediate filament. Undergoes deimination of some arginine residues (citrullination). As to expression, expressed in the infundibular regions of the ear, the interfollicular epidermis of the back, in the interscale regions containing hair follicles in the tail, and in the soles of the footpads (at protein level).

The protein resides in the cell membrane. The protein localises to the cytoplasm. May regulate the activity of kinases such as PKC and SRC via binding to integrin beta-1 (ITB1) and the receptor of activated protein C kinase 1 (RACK1). In complex with C1QBP is a high affinity receptor for kininogen-1/HMWK. In Mus musculus (Mouse), this protein is Keratin, type II cytoskeletal 1 (Krt1).